The sequence spans 225 residues: Claudin-17 (225 aa).

At 1-7 the chain is on the cytoplasmic side; it reads MAFYPLQ. Residues 8–28 traverse the membrane as a helical segment; sequence IAGLVLGFLGMVGTLATTLLP. Topologically, residues 29–81 are extracellular; that stretch reads QWRVSAFIGSNIIVFERIWEGLWMNCVRQAKARLQCKFYSSMLALSPALEAAR. The helical transmembrane segment at 82–102 threads the bilayer; sequence ALMCVAVALSLIALIIGICGM. The Cytoplasmic portion of the chain corresponds to 103-124; it reads KKIQCTGSNERAKAYLLGTSGV. The chain crosses the membrane as a helical span at residues 125–145; that stretch reads LFILTGIFVLIPVCWTANIII. Over 146–164 the chain is Extracellular; sequence RDFYNPAVHVGQKRELGAA. Residues 165-185 form a helical membrane-spanning segment; it reads LFLGWASVAVLFIAGGLLCGF. The Cytoplasmic segment spans residues 186-225; the sequence is CCCNRKKQRDGYPAPRPSMPRTDERRRNMTRQSETPTSYV. The disordered stretch occupies residues 194–225; the sequence is RDGYPAPRPSMPRTDERRRNMTRQSETPTSYV. Positions 215-225 are enriched in polar residues; that stretch reads TRQSETPTSYV.

It belongs to the claudin family. As to quaternary structure, does not form homotypic polymeric strands and it is not sufficient to form tight junctions by its own. Interacts with OCLN.

The protein localises to the cell junction. It localises to the tight junction. Its subcellular location is the cell membrane. The catalysed reaction is chloride(in) = chloride(out). It catalyses the reaction hydrogencarbonate(in) = hydrogencarbonate(out). The enzyme catalyses bromide(in) = bromide(out). It carries out the reaction iodide(out) = iodide(in). The catalysed reaction is fluoride(in) = fluoride(out). It catalyses the reaction nitrate(in) = nitrate(out). The enzyme catalyses thiocyanate(in) = thiocyanate(out). In terms of biological role, channel-forming tight junction protein with selectivity for anions, including chloride and hydrogencarbonate, and for solutes smaller than 9 Angstrom in diameter. In the kidney proximal tubule, may be involved in quantitative reabsorption of filtered anions. Does not affect water permeability. This chain is Claudin-17 (CLDN17), found in Sus scrofa (Pig).